Here is a 310-residue protein sequence, read N- to C-terminus: Lipoyl synthase (310 aa).

[4Fe-4S] cluster-binding residues include Cys-61, Cys-66, Cys-72, Cys-87, Cys-91, Cys-94, and Ser-300. Positions 73-289 (FNNGTATFMI…EYIALSLGFS (217 aa)) constitute a Radical SAM core domain.

It belongs to the radical SAM superfamily. Lipoyl synthase family. Requires [4Fe-4S] cluster as cofactor.

The protein resides in the cytoplasm. It carries out the reaction [[Fe-S] cluster scaffold protein carrying a second [4Fe-4S](2+) cluster] + N(6)-octanoyl-L-lysyl-[protein] + 2 oxidized [2Fe-2S]-[ferredoxin] + 2 S-adenosyl-L-methionine + 4 H(+) = [[Fe-S] cluster scaffold protein] + N(6)-[(R)-dihydrolipoyl]-L-lysyl-[protein] + 4 Fe(3+) + 2 hydrogen sulfide + 2 5'-deoxyadenosine + 2 L-methionine + 2 reduced [2Fe-2S]-[ferredoxin]. Its pathway is protein modification; protein lipoylation via endogenous pathway; protein N(6)-(lipoyl)lysine from octanoyl-[acyl-carrier-protein]: step 2/2. Functionally, catalyzes the radical-mediated insertion of two sulfur atoms into the C-6 and C-8 positions of the octanoyl moiety bound to the lipoyl domains of lipoate-dependent enzymes, thereby converting the octanoylated domains into lipoylated derivatives. The polypeptide is Lipoyl synthase (Buchnera aphidicola subsp. Cinara cedri (strain Cc)).